A 201-amino-acid polypeptide reads, in one-letter code: Regulator of G-protein signaling 1 (201 aa).

The RGS domain maps to 75-191; it reads SLEKLLISED…LKSEIFLRLA (117 aa).

The protein localises to the cell membrane. It localises to the cytoplasm. The protein resides in the cytosol. In terms of biological role, regulates G protein-coupled receptor signaling cascades, including signaling downstream of the N-formylpeptide chemoattractant receptors and leukotriene receptors. Inhibits B cell chemotaxis. Inhibits signal transduction by increasing the GTPase activity of G protein alpha subunits, thereby driving them into their inactive GDP-bound form. The polypeptide is Regulator of G-protein signaling 1 (rgs1) (Xenopus tropicalis (Western clawed frog)).